Reading from the N-terminus, the 365-residue chain is Probable receptor-like protein kinase At2g47060 (365 aa).

Residues 18–48 are disordered; that stretch reads DYGGRHNQAKHFPPGNDARHHQASETAQKGP. The Protein kinase domain maps to 73–353; it reads FGSNSLIGEG…IVVKALQPLL (281 aa). ATP contacts are provided by residues 79-87 and Lys101; that span reads IGEGSYGRV. Residue Tyr145 is modified to Phosphotyrosine. The active-site Proton acceptor is the Asp203. Residues Ser207 and Ser237 each carry the phosphoserine modification. Thr238 and Thr243 each carry phosphothreonine. Tyr251 carries the phosphotyrosine modification.

This sequence belongs to the protein kinase superfamily. Ser/Thr protein kinase family.

The catalysed reaction is L-seryl-[protein] + ATP = O-phospho-L-seryl-[protein] + ADP + H(+). The enzyme catalyses L-threonyl-[protein] + ATP = O-phospho-L-threonyl-[protein] + ADP + H(+). The chain is Probable receptor-like protein kinase At2g47060 from Arabidopsis thaliana (Mouse-ear cress).